The chain runs to 439 residues: Ribosomal protein uS12 methylthiotransferase RimO (439 aa).

One can recognise an MTTase N-terminal domain in the interval lysine 7–asparagine 119. [4Fe-4S] cluster-binding residues include cysteine 16, cysteine 50, cysteine 82, cysteine 151, cysteine 155, and cysteine 158. Positions threonine 137–lysine 368 constitute a Radical SAM core domain.

It belongs to the methylthiotransferase family. RimO subfamily. The cofactor is [4Fe-4S] cluster.

It is found in the cytoplasm. It catalyses the reaction L-aspartate(89)-[ribosomal protein uS12]-hydrogen + (sulfur carrier)-SH + AH2 + 2 S-adenosyl-L-methionine = 3-methylsulfanyl-L-aspartate(89)-[ribosomal protein uS12]-hydrogen + (sulfur carrier)-H + 5'-deoxyadenosine + L-methionine + A + S-adenosyl-L-homocysteine + 2 H(+). Functionally, catalyzes the methylthiolation of an aspartic acid residue of ribosomal protein uS12. The protein is Ribosomal protein uS12 methylthiotransferase RimO of Helicobacter pylori (strain P12).